The sequence spans 809 residues: F-BAR domain only protein 2 (809 aa).

The region spanning 3 to 250 (MAHFVENFWG…NMANTTIESL (248 aa)) is the F-BAR domain. A mediates dimerization and binding to membranes enriched in Pi(4,5)-P2 and induces their tubulation region spans residues 3–274 (MAHFVENFWG…PGLIEFEECD (272 aa)). A coiled-coil region spans residues 87–156 (HLDLVRKLQE…CVEQERLKKE (70 aa)). A Glycyl lysine isopeptide (Lys-Gly) (interchain with G-Cter in SUMO2) cross-link involves residue Lys-297. The tract at residues 301–352 (DAESVECPDADSLNIPDVDEEGFSIKPEANQNDTKENHFYSSSDSDSEDEEP) is disordered. Ser-312 carries the phosphoserine modification. Thr-385 is modified (phosphothreonine). Phosphoserine occurs at positions 387, 394, 402, and 403. The span at 390–416 (VSRHSPVQMNRNSSNEELTKSKPSSLP) shows a compositional bias: polar residues. 2 disordered regions span residues 390-422 (VSRHSPVQMNRNSSNEELTKSKPSSLPTEKGTN) and 435-536 (LESS…PVSL). The segment covering 435–456 (LESSSAPLTSSSSARPTTPLSL) has biased composition (low complexity). Phosphoserine is present on residues Ser-487, Ser-492, Ser-495, Ser-507, Ser-509, Ser-510, and Ser-532. The segment covering 501 to 520 (PLARAESSSSISSSASLSAA) has biased composition (low complexity). Positions 520–809 (ANTPTVGVSR…FATGRYLADC (290 aa)) are mediates interaction with DAB2, EPS15, EPS15R and ITSN1. Residues 541-808 (TLPVAIALTE…RFATGRYLAD (268 aa)) form the MHD domain.

It belongs to the FCHO family. As to quaternary structure, homodimer; disulfide-linked. May form homotetramer. Interacts with AP2A1. Interacts with EPS15, EPS15R, ITSN1 and ITSN2; recruit those scaffolding proteins which in turn may interact with the adaptor protein complex AP-2 at the plasma membrane. Interacts with DAB2 (via DPF motifs); mediates LDL receptor/LDLR endocytosis. In terms of processing, ubiquitinated. Mainly undergoes monoubiquitination but also polyubiquitination. As to expression, ubiquitously expressed (at protein level).

The protein localises to the membrane. It localises to the clathrin-coated pit. In terms of biological role, functions in an early step of clathrin-mediated endocytosis. Has both a membrane binding/bending activity and the ability to recruit proteins essential to the formation of functional clathrin-coated pits. Has a lipid-binding activity with a preference for membranes enriched in phosphatidylserine and phosphoinositides (Pi(4,5) biphosphate) like the plasma membrane. Its membrane-bending activity might be important for the subsequent action of clathrin and adaptors in the formation of clathrin-coated vesicles. Involved in adaptor protein complex AP-2-dependent endocytosis of the transferrin receptor, it also functions in the AP-2-independent endocytosis of the LDL receptor. The polypeptide is F-BAR domain only protein 2 (Fcho2) (Mus musculus (Mouse)).